A 121-amino-acid polypeptide reads, in one-letter code: Amelogenin (121 aa).

The disordered stretch occupies residues Leu1–Ser121. 2 stretches are compositionally biased toward polar residues: residues Ser10–Leu19 and His47–Leu59. The segment covering Pro60–Ala84 has biased composition (low complexity). Over residues Pro85–Ser121 the composition is skewed to pro residues.

Belongs to the amelogenin family.

The protein resides in the secreted. It localises to the extracellular space. The protein localises to the extracellular matrix. Plays a role in the biomineralization of teeth. Seems to regulate the formation of crystallites during the secretory stage of tooth enamel development. Thought to play a major role in the structural organization and mineralization of developing enamel. The protein is Amelogenin (AMEL) of Tachyglossus aculeatus aculeatus (Southeast Australian short-beaked echidna).